Reading from the N-terminus, the 318-residue chain is Methionyl-tRNA formyltransferase (318 aa).

A (6S)-5,6,7,8-tetrahydrofolate-binding site is contributed by 114-117 (SVLP).

It belongs to the Fmt family.

The catalysed reaction is L-methionyl-tRNA(fMet) + (6R)-10-formyltetrahydrofolate = N-formyl-L-methionyl-tRNA(fMet) + (6S)-5,6,7,8-tetrahydrofolate + H(+). Attaches a formyl group to the free amino group of methionyl-tRNA(fMet). The formyl group appears to play a dual role in the initiator identity of N-formylmethionyl-tRNA by promoting its recognition by IF2 and preventing the misappropriation of this tRNA by the elongation apparatus. The protein is Methionyl-tRNA formyltransferase of Bdellovibrio bacteriovorus (strain ATCC 15356 / DSM 50701 / NCIMB 9529 / HD100).